The chain runs to 290 residues: 4-diphosphocytidyl-2-C-methyl-D-erythritol kinase (290 aa).

Lys13 is a catalytic residue. 96-106 (PMGGGIGGGSS) lines the ATP pocket. Residue Asp138 is part of the active site.

Belongs to the GHMP kinase family. IspE subfamily.

The catalysed reaction is 4-CDP-2-C-methyl-D-erythritol + ATP = 4-CDP-2-C-methyl-D-erythritol 2-phosphate + ADP + H(+). It participates in isoprenoid biosynthesis; isopentenyl diphosphate biosynthesis via DXP pathway; isopentenyl diphosphate from 1-deoxy-D-xylulose 5-phosphate: step 3/6. Functionally, catalyzes the phosphorylation of the position 2 hydroxy group of 4-diphosphocytidyl-2C-methyl-D-erythritol. This chain is 4-diphosphocytidyl-2-C-methyl-D-erythritol kinase, found in Vibrio vulnificus (strain CMCP6).